Reading from the N-terminus, the 514-residue chain is MQQLNPSEISELIRARIAGFEGRVETRSQGTIISLSDGILRIHGLEDVMYGEMLELPGGRFGLAMNLEQDNVGAVVLGEFSGLQEGDVVKCTGRVMQVPIGKALLGRVVNALGQPVDGKGAIDAEEFDVLEKIAPGVIDRQSVDEPMQTGIKSIDAMVPIGRGQRELIIGDRQTGKTAVAVDAILNQKGKDVQCIYVAIGQKASTVAGVVRKLEEYGAMEYTTVIAANASESAAMQYLAPYAGCTMGEYFRDRGMNALIVYDDLTKQAWAYRHISLLLRRPPGREAYPGDVFYLHSRLLERAARVNADFVEKFTKGEVKGKTGSLTALPIIETQAGDVSAFVPTNVISITDGQIYLETDLFNAGIRPAINAGLSVSRVGGAAQTKIIKKLGGGIRLDLAQYRELAAFAQFASDLDEITRKQIERGKRVTELLKQDQFSPMSVADEGAALFAASSGALDDVEVANVRPFEKALLAYLNSNNKELMAGIEEKKDLTDDLKKQLDAAVKQFKSGSTY.

170 to 177 is an ATP binding site; it reads GDRQTGKT.

Belongs to the ATPase alpha/beta chains family. F-type ATPases have 2 components, CF(1) - the catalytic core - and CF(0) - the membrane proton channel. CF(1) has five subunits: alpha(3), beta(3), gamma(1), delta(1), epsilon(1). CF(0) has three main subunits: a(1), b(2) and c(9-12). The alpha and beta chains form an alternating ring which encloses part of the gamma chain. CF(1) is attached to CF(0) by a central stalk formed by the gamma and epsilon chains, while a peripheral stalk is formed by the delta and b chains.

It is found in the cell inner membrane. The catalysed reaction is ATP + H2O + 4 H(+)(in) = ADP + phosphate + 5 H(+)(out). Functionally, produces ATP from ADP in the presence of a proton gradient across the membrane. The alpha chain is a regulatory subunit. The sequence is that of ATP synthase subunit alpha from Acidithiobacillus ferridurans.